A 216-amino-acid chain; its full sequence is MOB kinase activator-like 2A (216 aa).

The Zn(2+) site is built by Cys81, Cys86, His162, and His167.

This sequence belongs to the MOB1/phocein family.

The protein resides in the nucleus. This Arabidopsis thaliana (Mouse-ear cress) protein is MOB kinase activator-like 2A.